Reading from the N-terminus, the 274-residue chain is Large ribosomal subunit protein uL2 (274 aa).

Disordered stretches follow at residues 28-53 (KPYA…TTRH) and 221-274 (RGTA…RTKK). Over residues 39–48 (KSGGRNNNGR) the composition is skewed to low complexity. Over residues 253–274 (KGKKTRKNKRTEHFIVHRRTKK) the composition is skewed to basic residues.

The protein belongs to the universal ribosomal protein uL2 family. As to quaternary structure, part of the 50S ribosomal subunit. Forms a bridge to the 30S subunit in the 70S ribosome.

Functionally, one of the primary rRNA binding proteins. Required for association of the 30S and 50S subunits to form the 70S ribosome, for tRNA binding and peptide bond formation. It has been suggested to have peptidyltransferase activity; this is somewhat controversial. Makes several contacts with the 16S rRNA in the 70S ribosome. This is Large ribosomal subunit protein uL2 from Proteus mirabilis (strain HI4320).